Consider the following 339-residue polypeptide: MLQEAIKKIVLKENLDEKEAYEVMGEIMSGNGTPSLIGGLLIGLRLKGESVEEITGFAKAMRDNAVKLQLDADYVIDTCGTGGDGGKTFNISTAVAIIASAAGVKVAKHGNRAVSSKSGSADVLRELGFNIEAEPMYTKKMIEEKGMGFLFAPLYHRAMKNVLPIRRELGTRTVFNLLGPLTNPAPIKGQVLGVYDRNLTHPIAEVLLKLGIERAMVVHGFDGLDEITTTAPTYVSEVKEGEIFDYVIDPLDFDIPYSKPEDLKGKGPRENAEIIIDILKGQKGPRRDIVVLNTAAALYVGKLVENLKEGVELAERLLNSGLAYERFLEILGYQRRIIS.

5-phospho-alpha-D-ribose 1-diphosphate contacts are provided by residues glycine 80, 83 to 84 (GD), threonine 88, 90 to 93 (NIST), 108 to 116 (KHGNRAVSS), and serine 120. Glycine 80 serves as a coordination point for anthranilate. Serine 92 contacts Mg(2+). Asparagine 111 contacts anthranilate. Arginine 166 lines the anthranilate pocket. Mg(2+) contacts are provided by aspartate 225 and glutamate 226.

Belongs to the anthranilate phosphoribosyltransferase family. In terms of assembly, homodimer. Mg(2+) is required as a cofactor.

It catalyses the reaction N-(5-phospho-beta-D-ribosyl)anthranilate + diphosphate = 5-phospho-alpha-D-ribose 1-diphosphate + anthranilate. The protein operates within amino-acid biosynthesis; L-tryptophan biosynthesis; L-tryptophan from chorismate: step 2/5. Catalyzes the transfer of the phosphoribosyl group of 5-phosphorylribose-1-pyrophosphate (PRPP) to anthranilate to yield N-(5'-phosphoribosyl)-anthranilate (PRA). The protein is Anthranilate phosphoribosyltransferase of Caldanaerobacter subterraneus subsp. tengcongensis (strain DSM 15242 / JCM 11007 / NBRC 100824 / MB4) (Thermoanaerobacter tengcongensis).